Here is a 356-residue protein sequence, read N- to C-terminus: Sulfate/thiosulfate import ATP-binding protein CysA (356 aa).

The ABC transporter domain occupies 3–237; it reads IEVKNLVKRF…PKNSFVFHFL (235 aa). 35 to 42 lines the ATP pocket; it reads GPSGSGKT.

The protein belongs to the ABC transporter superfamily. Sulfate/tungstate importer (TC 3.A.1.6) family. The complex is composed of two ATP-binding proteins (CysA), two transmembrane proteins (CysT and CysW) and a solute-binding protein (CysP).

Its subcellular location is the cell inner membrane. The catalysed reaction is sulfate(out) + ATP + H2O = sulfate(in) + ADP + phosphate + H(+). It carries out the reaction thiosulfate(out) + ATP + H2O = thiosulfate(in) + ADP + phosphate + H(+). Functionally, part of the ABC transporter complex CysAWTP involved in sulfate/thiosulfate import. Responsible for energy coupling to the transport system. The polypeptide is Sulfate/thiosulfate import ATP-binding protein CysA (Leptospira interrogans serogroup Icterohaemorrhagiae serovar copenhageni (strain Fiocruz L1-130)).